An 82-amino-acid chain; its full sequence is MSYEKVSQATDLVIGTKQTLKALEQEEVLEVVIAKDAEPRVVNKVEAMASVKQIPIIYVDSMKKLGKACGIDVGAATVALKK.

The protein belongs to the eukaryotic ribosomal protein eL8 family.

This Halalkalibacterium halodurans (strain ATCC BAA-125 / DSM 18197 / FERM 7344 / JCM 9153 / C-125) (Bacillus halodurans) protein is RNA-binding protein BH0128.